Consider the following 316-residue polypeptide: Protoheme IX farnesyltransferase (316 aa).

8 helical membrane-spanning segments follow: residues Val35 to Gln55, Pro56 to Leu76, Val119 to Phe139, Ile156 to Gly176, Leu183 to Ile203, Ile229 to Leu246, Gly250 to Leu272, and Ala283 to Leu303.

Belongs to the UbiA prenyltransferase family. Protoheme IX farnesyltransferase subfamily.

The protein resides in the cell inner membrane. The catalysed reaction is heme b + (2E,6E)-farnesyl diphosphate + H2O = Fe(II)-heme o + diphosphate. The protein operates within porphyrin-containing compound metabolism; heme O biosynthesis; heme O from protoheme: step 1/1. In terms of biological role, converts heme B (protoheme IX) to heme O by substitution of the vinyl group on carbon 2 of heme B porphyrin ring with a hydroxyethyl farnesyl side group. In Methylobacterium radiotolerans (strain ATCC 27329 / DSM 1819 / JCM 2831 / NBRC 15690 / NCIMB 10815 / 0-1), this protein is Protoheme IX farnesyltransferase.